Reading from the N-terminus, the 505-residue chain is Histidine ammonia-lyase (505 aa).

The segment at residues 141–143 (ASG) is a cross-link (5-imidazolinone (Ala-Gly)). S142 is subject to 2,3-didehydroalanine (Ser).

Belongs to the PAL/histidase family. In terms of processing, contains an active site 4-methylidene-imidazol-5-one (MIO), which is formed autocatalytically by cyclization and dehydration of residues Ala-Ser-Gly.

It localises to the cytoplasm. The enzyme catalyses L-histidine = trans-urocanate + NH4(+). It functions in the pathway amino-acid degradation; L-histidine degradation into L-glutamate; N-formimidoyl-L-glutamate from L-histidine: step 1/3. The chain is Histidine ammonia-lyase from Bacillus cereus (strain 03BB102).